The primary structure comprises 494 residues: Guanosine-5'-triphosphate,3'-diphosphate pyrophosphatase (494 aa).

Belongs to the GppA/Ppx family. GppA subfamily.

The enzyme catalyses guanosine 3'-diphosphate 5'-triphosphate + H2O = guanosine 3',5'-bis(diphosphate) + phosphate + H(+). It participates in purine metabolism; ppGpp biosynthesis; ppGpp from GTP: step 2/2. In terms of biological role, catalyzes the conversion of pppGpp to ppGpp. Guanosine pentaphosphate (pppGpp) is a cytoplasmic signaling molecule which together with ppGpp controls the 'stringent response', an adaptive process that allows bacteria to respond to amino acid starvation, resulting in the coordinated regulation of numerous cellular activities. The protein is Guanosine-5'-triphosphate,3'-diphosphate pyrophosphatase of Citrobacter koseri (strain ATCC BAA-895 / CDC 4225-83 / SGSC4696).